The primary structure comprises 132 residues: Interleukin-4 (132 aa).

Positions 1–24 (MGLTSQLIPTLVCLLALTSTFVHG) are cleaved as a signal peptide. 6 N-linked (GlcNAc...) asparagine glycosylation sites follow: asparagine 28, asparagine 45, asparagine 62, asparagine 83, asparagine 95, and asparagine 101. 2 cysteine pairs are disulfide-bonded: cysteine 48-cysteine 84 and cysteine 70-cysteine 104.

It belongs to the IL-4/IL-13 family.

The protein resides in the secreted. Its function is as follows. Participates in at least several B-cell activation processes as well as of other cell types. It is a costimulator of DNA-synthesis. It induces the expression of class II MHC molecules on resting B-cells. It enhances both secretion and cell surface expression of IgE and IgG1. It also regulates the expression of the low affinity Fc receptor for IgE (CD23) on both lymphocytes and monocytes. Positively regulates IL31RA expression in macrophages. Stimulates autophagy in dendritic cells by interfering with mTORC1 signaling and through the induction of RUFY4. This Canis lupus familiaris (Dog) protein is Interleukin-4 (IL4).